We begin with the raw amino-acid sequence, 333 residues long: Adenosine deaminase (333 aa).

The Zn(2+) site is built by His12 and His14. Substrate-binding residues include His14, Asp16, and Gly170. His197 lines the Zn(2+) pocket. The active-site Proton donor is Glu200. Residue Asp278 participates in Zn(2+) binding. Residue Asp279 participates in substrate binding.

It belongs to the metallo-dependent hydrolases superfamily. Adenosine and AMP deaminases family. Adenosine deaminase subfamily. Zn(2+) is required as a cofactor.

It carries out the reaction adenosine + H2O + H(+) = inosine + NH4(+). The catalysed reaction is 2'-deoxyadenosine + H2O + H(+) = 2'-deoxyinosine + NH4(+). Its function is as follows. Catalyzes the hydrolytic deamination of adenosine and 2-deoxyadenosine. The protein is Adenosine deaminase of Salmonella enteritidis PT4 (strain P125109).